We begin with the raw amino-acid sequence, 193 residues long: 3-isopropylmalate dehydratase small subunit (193 aa).

The protein belongs to the LeuD family. LeuD type 1 subfamily. As to quaternary structure, heterodimer of LeuC and LeuD.

The enzyme catalyses (2R,3S)-3-isopropylmalate = (2S)-2-isopropylmalate. The protein operates within amino-acid biosynthesis; L-leucine biosynthesis; L-leucine from 3-methyl-2-oxobutanoate: step 2/4. Catalyzes the isomerization between 2-isopropylmalate and 3-isopropylmalate, via the formation of 2-isopropylmaleate. The chain is 3-isopropylmalate dehydratase small subunit from Bacillus cereus (strain ZK / E33L).